Here is a 432-residue protein sequence, read N- to C-terminus: D-amino acid dehydrogenase (432 aa).

Residue 3–17 (VVILGSGVVGVASAW) participates in FAD binding.

It belongs to the DadA oxidoreductase family. FAD serves as cofactor.

The catalysed reaction is a D-alpha-amino acid + A + H2O = a 2-oxocarboxylate + AH2 + NH4(+). Its pathway is amino-acid degradation; D-alanine degradation; NH(3) and pyruvate from D-alanine: step 1/1. In terms of biological role, oxidative deamination of D-amino acids. The sequence is that of D-amino acid dehydrogenase from Shigella boydii serotype 4 (strain Sb227).